The chain runs to 62 residues: Lepidopteran-selective toxin (62 aa).

Positions methionine 1–alanine 24 are cleaved as a signal peptide. Disulfide bonds link cysteine 26–cysteine 43, cysteine 29–cysteine 51, cysteine 40–cysteine 56, and cysteine 44–cysteine 58. A propeptide is located at residue tyrosine 62.

Belongs to the short scorpion toxin superfamily. Chloride channel inhibitor family. Expressed by the venom gland.

The protein localises to the secreted. In terms of biological role, toxin with unknown function in healthy organisms. On glioma cells, interacts with chloride channels (probably ClC-3/CLCN3) and MMP2 at the surface of glioma cells. This complex is then internalized via caveolae, thus inhibiting the chloride channels necessary for cell shrinkage and tumor propagation. Induces flaccid paralysis in H.virescens larvae. Is not toxic to S.falculata larvae or mice. The protein is Lepidopteran-selective toxin of Hottentotta tamulus (Eastern Indian scorpion).